The primary structure comprises 127 residues: MSFDVPDDLRYLESHEWVRVAGDTAEVGITAFAQDELGDVVFVELPDEGTELTAGEDFGVVESIKAVSDVYAPVSGTVTAVNDRLRDEPELLNEDPFGDGWMLTVEVDDKSETDDLLSPDAYRDQIE.

The Lipoyl-binding domain maps to 24 to 106 (TAEVGITAFA…FGDGWMLTVE (83 aa)). The residue at position 65 (K65) is an N6-lipoyllysine.

It belongs to the GcvH family. As to quaternary structure, the glycine cleavage system is composed of four proteins: P, T, L and H. Requires (R)-lipoate as cofactor.

The glycine cleavage system catalyzes the degradation of glycine. The H protein shuttles the methylamine group of glycine from the P protein to the T protein. This is Probable glycine cleavage system H protein from Haloarcula marismortui (strain ATCC 43049 / DSM 3752 / JCM 8966 / VKM B-1809) (Halobacterium marismortui).